The chain runs to 801 residues: DNA mismatch repair protein MutS (801 aa).

Residue 590–597 participates in ATP binding; that stretch reads GPNMSGKS.

This sequence belongs to the DNA mismatch repair MutS family.

In terms of biological role, this protein is involved in the repair of mismatches in DNA. It is possible that it carries out the mismatch recognition step. This protein has a weak ATPase activity. In Thermotoga neapolitana (strain ATCC 49049 / DSM 4359 / NBRC 107923 / NS-E), this protein is DNA mismatch repair protein MutS.